A 445-amino-acid chain; its full sequence is FAS-associated factor 2-A (445 aa).

The 42-residue stretch at 12–53 (EQTEKLLQFQDLTGIESMDQCRQTLQQHNWNIEAAVQDRLNE) folds into the UBA domain. Residues 275 to 353 (SERLEREERN…ERKSECLPAE (79 aa)) adopt a coiled-coil conformation. A disordered region spans residues 302 to 354 (RADQEKERKKKEKQEQKRREEEEAQRKQMLEERKKRNLEEEKERKSECLPAEP). Residues 303-348 (ADQEKERKKKEKQEQKRREEEEAQRKQMLEERKKRNLEEEKERKSE) show a composition bias toward basic and acidic residues. In terms of domain architecture, UBX spans 357-439 (DHPDNVKIIF…GLSQSQLLFV (83 aa)).

The protein localises to the cytoplasm. It localises to the lipid droplet. The protein resides in the endoplasmic reticulum. Functionally, plays an important role in endoplasmic reticulum-associated degradation (ERAD) that mediates ubiquitin-dependent degradation of misfolded endoplasmic reticulum proteins. Involved in inhibition of lipid droplet degradation. Involved in stress granule disassembly. The chain is FAS-associated factor 2-A (faf2-a) from Xenopus laevis (African clawed frog).